The following is a 123-amino-acid chain: MRIQSLLLLGALLAVGSQPPAAFGRKKGEKPGACPPDDGPCLLSVPDQCMEDRQCPLTRKCCYRACFRQCVPRVSVKLGSCPEDQLRCLSPMNHLCHKDADCSGKKRCCSSACGRDCRDPVRG.

The signal sequence occupies residues Met-1 to Gly-24. 2 WAP domains span residues Lys-27 to Arg-73 and Val-74 to Val-121. Intrachain disulfides connect Cys-34-Cys-62, Cys-41-Cys-66, Cys-49-Cys-61, Cys-55-Cys-70, Cys-81-Cys-109, Cys-88-Cys-113, Cys-96-Cys-108, and Cys-102-Cys-117.

The protein resides in the secreted. Functionally, putative acid-stable proteinase inhibitor. This Aotus nancymaae (Ma's night monkey) protein is WAP four-disulfide core domain protein 5 (WFDC5).